The following is a 364-amino-acid chain: MLDTMRWTGDGLLELLDQTRLPFEKSYIKCTEYTDVAEAIKRLAVRGAPAIGAAAAYGLVLAARKIRANTKKEFLTELEARARELAATRPTAVNLHWALNRMLRKMRLAEPEDAGLLCDLLLEEAQAIFREDITGNRRMARYGLELIPEGARILTHCNAGALATAGYGTALGLVRAAHEAGRRVSVYAGETRPLLQGARLTAWEMLQEGIPVTLITDSMAGYLLAKGKADLVVVGADRIAANGDVANKIGTYSLAVLAREHKIPFYVAAPVSTIDLSLASGEEIPIEERDSSEVTHLAGRPVAPEGVNVWNPAFDVTPARLITAIITDRGIVKPPYDENLRKTVEGLNRNLVIELTAEDGKSNL.

Residues 46-48, arginine 89, and glutamine 196 contribute to the substrate site; that span reads RGA. The Proton donor role is filled by aspartate 237. Position 247 to 248 (247 to 248) interacts with substrate; sequence NK.

The protein belongs to the eIF-2B alpha/beta/delta subunits family. MtnA subfamily.

It carries out the reaction 5-(methylsulfanyl)-alpha-D-ribose 1-phosphate = 5-(methylsulfanyl)-D-ribulose 1-phosphate. Its pathway is amino-acid biosynthesis; L-methionine biosynthesis via salvage pathway; L-methionine from S-methyl-5-thio-alpha-D-ribose 1-phosphate: step 1/6. Its function is as follows. Catalyzes the interconversion of methylthioribose-1-phosphate (MTR-1-P) into methylthioribulose-1-phosphate (MTRu-1-P). The protein is Methylthioribose-1-phosphate isomerase of Pelotomaculum thermopropionicum (strain DSM 13744 / JCM 10971 / SI).